The chain runs to 111 residues: Ribosome-binding factor A (111 aa).

The protein belongs to the RbfA family. As to quaternary structure, monomer. Binds 30S ribosomal subunits, but not 50S ribosomal subunits or 70S ribosomes.

The protein localises to the cytoplasm. In terms of biological role, one of several proteins that assist in the late maturation steps of the functional core of the 30S ribosomal subunit. Associates with free 30S ribosomal subunits (but not with 30S subunits that are part of 70S ribosomes or polysomes). Required for efficient processing of 16S rRNA. May interact with the 5'-terminal helix region of 16S rRNA. The polypeptide is Ribosome-binding factor A (Helicobacter pylori (strain G27)).